The chain runs to 705 residues: MKNTELSQKKKLDRQSRRKPAKSCHFCRVRKLKCDRVRPFCGSCSSRNRKQCEYKENTSAMEDQLRKKYRRCSKLEMARRIEELESQLTKQSQPNIHEGQNPLSNMRYLSSKHNRHILYGPTSYRAILATQTDTFAKYREEIWQVLKLSRNNWKREHHYSTLSEISSIETAPPHSGSPSVIEYLCESLPNYEVLCEYLTDFFASDFYDSYQIVHKEKVLRDLQDCFVKGPRSHKTGQHTIISLNLDSKKNYYKVGVMTAIMCLASHPKEVPEAIEVFHKVLTSFVSAKVFYTERVQFLFLRYLYINVAGLDGGDQSHCIFIHGLTIDTAIHMGLNEDLRRLYLSKNHPIEEIPYLERLWLWILFTDVKISLSTGIPVRINDDFVNKVRLENYSSSGDILLYKTTLRLRNIMKQIHAREKPPDIPLIIEDLKKFTIKMFKPLDFYLNASNLNGNEFTELQLWHATLHMIGSLSNLYTLTHQDFDARIFNFSVLAPLNSLHLCFNVLETYFELDNSKLSSKSLCLSKKWPHLNNALFLIYVNAFRALIQIYTIFLQYMENKDIQLFIQRNSSALTYSICPGDFEGPHNKCISLKIAFKEMENIFDHIHQEKLKPLTQIWQNSYYFSIIISMEKIGRRAFNKGMKNIDEGPETENDATENSLTTILNDLEGPLEDFSENFIDDILGSPSAFFDTAISGWSNFEDFFSR.

Positions 24 to 52 (CHFCRVRKLKCDRVRPFCGSCSSRNRKQC) form a DNA-binding region, zn(2)-C6 fungal-type.

The protein localises to the nucleus. This is an uncharacterized protein from Saccharomyces cerevisiae (strain ATCC 204508 / S288c) (Baker's yeast).